Consider the following 87-residue polypeptide: HssA/B-like protein 57 (87 aa).

The protein belongs to the hssA/B family.

The sequence is that of HssA/B-like protein 57 (hssl57) from Dictyostelium discoideum (Social amoeba).